We begin with the raw amino-acid sequence, 65 residues long: Small ribosomal subunit protein bS21B (65 aa).

Belongs to the bacterial ribosomal protein bS21 family.

The chain is Small ribosomal subunit protein bS21B from Francisella tularensis subsp. holarctica (strain LVS).